The following is a 453-amino-acid chain: Cholecystokinin receptor (453 aa).

The Extracellular segment spans residues 1–64; it reads MESLRSLSNI…ILDRKKPSPS (64 aa). Residues Asn-9, Asn-22, Asn-30, Asn-35, and Asn-39 are each glycosylated (N-linked (GlcNAc...) asparagine). Residues 65–94 form a helical membrane-spanning segment; the sequence is DLNLWVRIVMYSVIFLLSVFGNTLIIIVLV. Residues 95 to 104 lie on the Cytoplasmic side of the membrane; sequence MNKRLRTITN. Residues 105–131 traverse the membrane as a helical segment; that stretch reads SFLLSLALSDLMVAVLCMPFTLIPNLM. Residues 132 to 142 lie on the Extracellular side of the membrane; the sequence is ENFIFGEVICR. The cysteines at positions 141 and 223 are disulfide-linked. The helical transmembrane segment at 143–164 threads the bilayer; the sequence is AAAYFMGLSVSVSTFNLVAISI. At 165–184 the chain is on the cytoplasmic side; that stretch reads ERYSAICNPLKSRVWQTRSH. Residues 185 to 205 form a helical membrane-spanning segment; that stretch reads AYRVIAATWVLSSIIMIPYLV. Topologically, residues 206-237 are extracellular; it reads YNKTVTFPMKDRRVGHQCRLVWPSKQVQQAWY. The helical transmembrane segment at 238–261 threads the bilayer; it reads VLLLTILFFIPGVVMIVAYGLISR. Topologically, residues 262 to 343 are cytoplasmic; sequence ELYRGIQFEM…KLMAKKRVIR (82 aa). The chain crosses the membrane as a helical span at residues 344-364; sequence MLIVIVAMFFICWMPIFVANT. The Extracellular segment spans residues 365–379; it reads WKAFDELSAFNTLTG. A helical transmembrane segment spans residues 380–403; that stretch reads APISFIHLLSYTSACVNPLIYCFM. Cys-401 carries the S-palmitoyl cysteine lipid modification. At 404-453 the chain is on the cytoplasmic side; that stretch reads NKRFRKAFLGTFSSCIKPCRNFRDTDEDIAATGASLSKFSYTTVSSLGPA.

Belongs to the G-protein coupled receptor 1 family. Brain and stomach.

It is found in the cell membrane. Receptor for cholecystokinin. This receptor mediates its action by association with G proteins that activate a phosphatidylinositol-calcium second messenger system. Has high affinity for CCK-8 and low affinities for gastrin-17-I, CCK-4, and unsulfated CCK-8. This Xenopus laevis (African clawed frog) protein is Cholecystokinin receptor (cckar).